Reading from the N-terminus, the 188-residue chain is Gag polyprotein (188 aa).

Over residues 77 to 90 the composition is skewed to basic and acidic residues; the sequence is VGETTVQRDAKMAP. The disordered stretch occupies residues 77–99; that stretch reads VGETTVQRDAKMAPEETATPKTV. The PPXY motif signature appears at 121–124; it reads PPPY. A disordered region spans residues 130 to 166; that stretch reads YPSLAGVGEQQGQGGDTPRGAEQPRAEPGHAGLAPGP.

In terms of processing, specific enzymatic cleavages in vivo yield mature proteins.

It localises to the virion. In Galliformes (EV-2), this protein is Gag polyprotein (ev-2).